Consider the following 463-residue polypeptide: DNA-binding protein K10 (463 aa).

Over residues 1-13 (MVSKNQFYQNWTM) the composition is skewed to polar residues. A disordered region spans residues 1–304 (MVSKNQFYQN…RNGPGPGPMM (304 aa)). Residues 14-50 (QSQQQHPHQMQQQFQQQQQPNLQHRNNQSNNNNCNNN) show a composition bias toward low complexity. Over residues 85-94 (QMMFSSSQMP) the composition is skewed to polar residues. Tandem repeats lie at residues 87–94 (MFSSSQMP), 95–102 (SDPLYIDF), 103–110 (SSPPPGFK), 111–118 (HNQVGSPK), 119–126 (KKSMKGIK), 127–134 (QQQHPSPN), and 135–142 (QQQPPSPN). The 7 X approximate tandem repeats stretch occupies residues 87–142 (MFSSSQMPSDPLYIDFSSPPPGFKHNQVGSPKKKSMKGIKQQQHPSPNQQQPPSPN). Positions 142–193 (NQQQHPSPNQQQHPSPNQQQHPNSNQQQHLSPNQQQGKMNNQNNNHMNQSQQ) are enriched in low complexity. Over residues 194 to 214 (PFNNQMNGSDWQRHPGNNPNQ) the composition is skewed to polar residues. Pro residues-rich tracts occupy residues 225-270 (GPPP…PPVP) and 282-291 (GGPPPPPPPL). Positions 397–416 (DELFAQYKGQRDKFVSLYEA) form a DNA-binding region, H-T-H motif. Residues 426-463 (AATVKAKDAKSDKDKNAISSQSAAPKAGSAKDATIPNP) are disordered. Residues 430–441 (KAKDAKSDKDKN) show a composition bias toward basic and acidic residues.

In terms of assembly, interacts (via N-terminus) with sqd; the interaction is direct and may be involved in localization of sqd to the oocyte during oogenesis.

The protein resides in the nucleus. Its function is as follows. May be involved in localization of sqd to the oocyte during oogenesis. The sequence is that of DNA-binding protein K10 (fs(1)K10) from Drosophila melanogaster (Fruit fly).